The following is a 255-amino-acid chain: Hemin import ATP-binding protein HmuV (255 aa).

The region spanning 2–238 (LRVENLHVRR…EPLKAVFGLE (237 aa)) is the ABC transporter domain. 34-41 (GPNGAGKS) is a binding site for ATP.

The protein belongs to the ABC transporter superfamily. Heme (hemin) importer (TC 3.A.1.14.5) family. In terms of assembly, the complex is composed of two ATP-binding proteins (HmuV), two transmembrane proteins (HmuU) and a solute-binding protein (HmuT).

The protein resides in the cell inner membrane. Functionally, part of the ABC transporter complex HmuTUV involved in hemin import. Responsible for energy coupling to the transport system. In Pseudomonas fluorescens (strain ATCC BAA-477 / NRRL B-23932 / Pf-5), this protein is Hemin import ATP-binding protein HmuV.